The sequence spans 235 residues: MKRSKSYRKAAEQIDRTRLYTPAEAVRLAKETSTVKFDATVEVAMRLGVDPRKADQMVRGTVNLPHGTGKTARVLVFAAGERAEQARAAGADYVGDDDLVERIQQGFLDFDAVVATPDMMGKIGRLGRILGPRGLMPNPKTGTVTMDVAKAVSDIKGGKIEFRVDRHGNLHLIIGKVSFDEQKLLENYLAAVDEVLRLKPSAAKGRYIKKITLTTTMGPGIPVDPNATREAAKAA.

The protein belongs to the universal ribosomal protein uL1 family. As to quaternary structure, part of the 50S ribosomal subunit.

In terms of biological role, binds directly to 23S rRNA. The L1 stalk is quite mobile in the ribosome, and is involved in E site tRNA release. Protein L1 is also a translational repressor protein, it controls the translation of the L11 operon by binding to its mRNA. In Thermobifida fusca (strain YX), this protein is Large ribosomal subunit protein uL1.